Reading from the N-terminus, the 182-residue chain is ADP-ribosylation factor-like protein 11 (182 aa).

Residue G2 is the site of N-myristoyl glycine attachment. Residues 19 to 26, 63 to 67, and 122 to 125 contribute to the GTP site; these read GLDSAGKT, DVGGQ, and NKQE.

This sequence belongs to the small GTPase superfamily. Arf family.

Functionally, may play a role in apoptosis. May act as a tumor suppressor. The polypeptide is ADP-ribosylation factor-like protein 11 (ARL11) (Bos taurus (Bovine)).